Consider the following 197-residue polypeptide: Large ribosomal subunit protein bL25 (197 aa).

The protein belongs to the bacterial ribosomal protein bL25 family. CTC subfamily. In terms of assembly, part of the 50S ribosomal subunit; part of the 5S rRNA/L5/L18/L25 subcomplex. Contacts the 5S rRNA. Binds to the 5S rRNA independently of L5 and L18.

Its function is as follows. This is one of the proteins that binds to the 5S RNA in the ribosome where it forms part of the central protuberance. In Pseudomonas putida (strain GB-1), this protein is Large ribosomal subunit protein bL25.